Here is a 515-residue protein sequence, read N- to C-terminus: MEEEDITLEHSDDLNKEESGESNRVNIEEPEHHDNSNKESTNLDDLNMLEEPKYHDNSNKESTNLDDLNMLEEPEHHDNSKKESTNLDDSNMLEEPKHHDNSNKESTNLDDLNMSEEPKHHDSSNKESTNLDNSNMDESENQKNFKIEEPKPSGDFRNEGPKQCDDSKIEKPELHVNSKIEEPIHRIDSEHNEPEYHTESKNEESEHNTKSIREEPIHHVDSKNEEPVYSKIPEKMGDEFSENSLSKSDSAVKQEGNLLIHPNNSLKDTAPSKCKEPPVDEALSKKEISDDIAQITSVTPITEKIEDKDKYISEVIDTYGKLADGFEYRAKTFCLEGRGKVLYMLGTECSRLLGFKDSYFMFHKTPSLRKVLTTQSERDQMVEMGLLASNFRFRQLSIVPARQMFLAFGARILMKGTIDPESHKALIEKNISWADDEYYHMDVMANGSTRSSSVKLELKSMDNQNSPSPFQGKDILTLAQGASFYNSKVMRTRNLRKEARLSYYTKLRGVNRSVS.

Residues 1-226 are disordered; sequence MEEEDITLEH…IHHVDSKNEE (226 aa). Composition is skewed to basic and acidic residues over residues 7 to 37, 50 to 59, 73 to 85, 94 to 103, and 116 to 125; these read TLEHSDDLNKEESGESNRVNIEEPEHHDNSN, EEPKYHDNSN, EPEHHDNSKKEST, EEPKHHDNSN, and EEPKHHDSSN. Over residues 126-136 the composition is skewed to polar residues; sequence KESTNLDNSNM. Positions 140 to 226 are enriched in basic and acidic residues; sequence ENQKNFKIEE…IHHVDSKNEE (87 aa).

It belongs to the RSC7/SWP82 family. SWP82 subfamily. Component of the SWI/SNF global transcription activator complex composed of at least arp9, arp42, snf5, snf22, snf30, snf59, sol1, ssr1, ssr2, ssr3, ssr4 and tfg3.

It localises to the nucleus. Functionally, component of the SWI/SNF complex, an ATP-dependent chromatin remodeling complex, which is required for the positive and negative regulation of gene expression of a large number of genes. It changes chromatin structure by altering DNA-histone contacts within a nucleosome, leading eventually to a change in nucleosome position, thus facilitating or repressing binding of gene-specific transcription factors. In Schizosaccharomyces pombe (strain 972 / ATCC 24843) (Fission yeast), this protein is SWI/SNF global transcription activator complex subunit snf59 (snf59).